A 535-amino-acid chain; its full sequence is Peptide chain release factor 3 (535 aa).

One can recognise a tr-type G domain in the interval 8–276; that stretch reads ARRRTFAIIS…ALVDLAPQPG (269 aa). Residues 17 to 24, 85 to 89, and 139 to 142 each bind GTP; these read SHPDAGKT, DTPGH, and NKMD.

It belongs to the TRAFAC class translation factor GTPase superfamily. Classic translation factor GTPase family. PrfC subfamily.

The protein localises to the cytoplasm. Functionally, increases the formation of ribosomal termination complexes and stimulates activities of RF-1 and RF-2. It binds guanine nucleotides and has strong preference for UGA stop codons. It may interact directly with the ribosome. The stimulation of RF-1 and RF-2 is significantly reduced by GTP and GDP, but not by GMP. This chain is Peptide chain release factor 3, found in Bordetella avium (strain 197N).